Here is a 177-residue protein sequence, read N- to C-terminus: Large ribosomal subunit protein uL6 (177 aa).

It belongs to the universal ribosomal protein uL6 family. In terms of assembly, part of the 50S ribosomal subunit.

Functionally, this protein binds to the 23S rRNA, and is important in its secondary structure. It is located near the subunit interface in the base of the L7/L12 stalk, and near the tRNA binding site of the peptidyltransferase center. This chain is Large ribosomal subunit protein uL6, found in Pseudomonas syringae pv. syringae (strain B728a).